Consider the following 120-residue polypeptide: Large ribosomal subunit protein uL14 (120 aa).

Belongs to the universal ribosomal protein uL14 family. Part of the 50S ribosomal subunit. Forms a cluster with proteins L3 and L19. In the 70S ribosome, L14 and L19 interact and together make contacts with the 16S rRNA in bridges B5 and B8.

In terms of biological role, binds to 23S rRNA. Forms part of two intersubunit bridges in the 70S ribosome. In Aster yellows witches'-broom phytoplasma (strain AYWB), this protein is Large ribosomal subunit protein uL14.